The chain runs to 207 residues: CASP-like protein 1D1 (207 aa).

The Cytoplasmic segment spans residues 1–40 (MATVDGTTAPSSGGKTATVALESGGGRYGGPAPAKCSGAN). A helical membrane pass occupies residues 41–61 (LALRALLFAVSLSALVVLVTA). The Extracellular portion of the chain corresponds to 62 to 89 (KQTVMVPFVIRPPQFILAPVPAKYTHSP). Residues 90–110 (ALIYLLAALCATCFYSLITAI) traverse the membrane as a helical segment. Residues 111–124 (SSVRLLSSSACSAK) lie on the Cytoplasmic side of the membrane. A helical transmembrane segment spans residues 125 to 145 (TLFYLILLDVFYAAVMASATG). Residues 146–176 (TAGAVAWVGLKGNSHTRWNKICNVYGKFCRH) lie on the Extracellular side of the membrane. Residues 177-197 (IGSSTFLALIAAIVLVLLAFL) form a helical membrane-spanning segment. The Cytoplasmic portion of the chain corresponds to 198–207 (NAYSLYRRSR).

It belongs to the Casparian strip membrane proteins (CASP) family. In terms of assembly, homodimer and heterodimers.

Its subcellular location is the cell membrane. This Oryza sativa subsp. japonica (Rice) protein is CASP-like protein 1D1.